The following is a 230-amino-acid chain: Enolase-phosphatase E1 (230 aa).

This sequence belongs to the HAD-like hydrolase superfamily. MasA/MtnC family. Monomer. The cofactor is Mg(2+).

The enzyme catalyses 5-methylsulfanyl-2,3-dioxopentyl phosphate + H2O = 1,2-dihydroxy-5-(methylsulfanyl)pent-1-en-3-one + phosphate. Its pathway is amino-acid biosynthesis; L-methionine biosynthesis via salvage pathway; L-methionine from S-methyl-5-thio-alpha-D-ribose 1-phosphate: step 3/6. The protein operates within amino-acid biosynthesis; L-methionine biosynthesis via salvage pathway; L-methionine from S-methyl-5-thio-alpha-D-ribose 1-phosphate: step 4/6. Functionally, bifunctional enzyme that catalyzes the enolization of 2,3-diketo-5-methylthiopentyl-1-phosphate (DK-MTP-1-P) into the intermediate 2-hydroxy-3-keto-5-methylthiopentenyl-1-phosphate (HK-MTPenyl-1-P), which is then dephosphorylated to form the acireductone 1,2-dihydroxy-3-keto-5-methylthiopentene (DHK-MTPene). The polypeptide is Enolase-phosphatase E1 (Bradyrhizobium sp. (strain BTAi1 / ATCC BAA-1182)).